We begin with the raw amino-acid sequence, 324 residues long: Adenine deaminase (324 aa).

Zn(2+) is bound by residues His8, His10, and His186. The active-site Proton donor is Glu189. A Zn(2+)-binding site is contributed by Asp267. Residue Asp268 participates in substrate binding.

This sequence belongs to the metallo-dependent hydrolases superfamily. Adenosine and AMP deaminases family. Adenine deaminase type 2 subfamily. Zn(2+) is required as a cofactor.

It catalyses the reaction adenine + H2O + H(+) = hypoxanthine + NH4(+). In terms of biological role, catalyzes the hydrolytic deamination of adenine to hypoxanthine. Plays an important role in the purine salvage pathway and in nitrogen catabolism. This chain is Adenine deaminase, found in Mesorhizobium japonicum (strain LMG 29417 / CECT 9101 / MAFF 303099) (Mesorhizobium loti (strain MAFF 303099)).